Here is a 209-residue protein sequence, read N- to C-terminus: uncharacterized protein (209 aa).

This is an uncharacterized protein from Klebsiella pneumoniae.